A 145-amino-acid chain; its full sequence is Protein X (145 aa).

The interval Pro-68–Phe-117 is mitochondrial targeting sequence.

The protein belongs to the orthohepadnavirus protein X family. In terms of assembly, may form homodimer. May interact with host CEBPA, CFLAR, CREB1, DDB1, E4F1, HBXIP, HSPD1/HSP60, NFKBIA, POLR2E and SMAD4. Interacts with host SMC5-SMC6 complex and induces its degradation. Interacts with host TRPC4AP; leading to prevent ubiquitination of TRPC4AP. Interacts with host PLSCR1; this interaction promotes ubiquitination and degradation of HBx and impairs HBx-mediated cell proliferation. Post-translationally, a fraction may be phosphorylated in insect cells and HepG2 cells, a human hepatoblastoma cell line. Phosphorylated in vitro by host protein kinase C or mitogen-activated protein kinase. N-acetylated in insect cells.

It localises to the host cytoplasm. It is found in the host nucleus. The protein localises to the host mitochondrion. Functionally, multifunctional protein that plays a role in silencing host antiviral defenses and promoting viral transcription. Does not seem to be essential for HBV infection. May be directly involved in development of cirrhosis and liver cancer (hepatocellular carcinoma). Most of cytosolic activities involve modulation of cytosolic calcium. The effect on apoptosis is controversial depending on the cell types in which the studies have been conducted. May induce apoptosis by localizing in mitochondria and causing loss of mitochondrial membrane potential. May also modulate apoptosis by binding host CFLAR, a key regulator of the death-inducing signaling complex (DISC). Promotes viral transcription by using the host E3 ubiquitin ligase DDB1 to target the SMC5-SMC6 complex to proteasomal degradation. This host complex would otherwise bind to viral episomal DNA, and prevents its transcription. Moderately stimulates transcription of many different viral and cellular transcription elements. Promoters and enhancers stimulated by HBx contain DNA binding sites for NF-kappa-B, AP-1, AP-2, c-EBP, ATF/CREB, or the calcium-activated factor NF-AT. The sequence is that of Protein X from Homo sapiens (Human).